The sequence spans 156 residues: ATP synthase subunit b (156 aa).

A helical membrane pass occupies residues 7–26 (FIGQMVAFAIFIYLTYRYVW).

This sequence belongs to the ATPase B chain family. F-type ATPases have 2 components, F(1) - the catalytic core - and F(0) - the membrane proton channel. F(1) has five subunits: alpha(3), beta(3), gamma(1), delta(1), epsilon(1). F(0) has three main subunits: a(1), b(2) and c(10-14). The alpha and beta chains form an alternating ring which encloses part of the gamma chain. F(1) is attached to F(0) by a central stalk formed by the gamma and epsilon chains, while a peripheral stalk is formed by the delta and b chains.

Its subcellular location is the cell inner membrane. F(1)F(0) ATP synthase produces ATP from ADP in the presence of a proton or sodium gradient. F-type ATPases consist of two structural domains, F(1) containing the extramembraneous catalytic core and F(0) containing the membrane proton channel, linked together by a central stalk and a peripheral stalk. During catalysis, ATP synthesis in the catalytic domain of F(1) is coupled via a rotary mechanism of the central stalk subunits to proton translocation. In terms of biological role, component of the F(0) channel, it forms part of the peripheral stalk, linking F(1) to F(0). The chain is ATP synthase subunit b from Cellvibrio japonicus (strain Ueda107) (Pseudomonas fluorescens subsp. cellulosa).